Here is a 215-residue protein sequence, read N- to C-terminus: MRTGIIAQKIGMTSVFNDKGERISLTLVKVDGCQVVGHKTLAKHGYNALVIGVKDQKISRVTKPMKQVFANAKISPKTKLKEFRISEDNFIDIASILEVDHFSVGQFVDITATTIGKGFAGSMKRHNFRGLEASHGVSISHRSHGSTGQRQDPGKVFKGKKMAGHMGCNQVTIQNLKIFAIDTNRKLIMIQGSIPGHKNSYLLVKDAIKKASITI.

The segment at 136–155 (GVSISHRSHGSTGQRQDPGK) is disordered. At Q151 the chain carries N5-methylglutamine.

The protein belongs to the universal ribosomal protein uL3 family. In terms of assembly, part of the 50S ribosomal subunit. Forms a cluster with proteins L14 and L19. Post-translationally, methylated by PrmB.

Functionally, one of the primary rRNA binding proteins, it binds directly near the 3'-end of the 23S rRNA, where it nucleates assembly of the 50S subunit. The protein is Large ribosomal subunit protein uL3 of Rickettsia typhi (strain ATCC VR-144 / Wilmington).